The chain runs to 882 residues: Molybdenum cofactor sulfurase (882 aa).

Residue Lys-265 is modified to N6-(pyridoxal phosphate)lysine. Cys-425 is a catalytic residue. The segment at 496–546 (GQPLPLATPGEAGAPPEDSEAQNAVPAARARGSSSPQEDTSPHSGVWNNSP) is disordered. The span at 527–546 (GSSSPQEDTSPHSGVWNNSP) shows a compositional bias: polar residues. Ser-528 and Ser-530 each carry phosphoserine. An MOSC domain is found at 707 to 868 (KQSSDFQRNA…LSVGSQVLPL (162 aa)).

It belongs to the class-V pyridoxal-phosphate-dependent aminotransferase family. MOCOS subfamily. Requires pyridoxal 5'-phosphate as cofactor. As to expression, ubiquitously expressed.

The enzyme catalyses Mo-molybdopterin + L-cysteine + AH2 = thio-Mo-molybdopterin + L-alanine + A + H2O. The protein operates within cofactor biosynthesis; molybdopterin biosynthesis. Its function is as follows. Sulfurates the molybdenum cofactor. Sulfation of molybdenum is essential for xanthine dehydrogenase (XDH) and aldehyde oxidase (ADO) enzymes in which molybdenum cofactor is liganded by 1 oxygen and 1 sulfur atom in active form. The chain is Molybdenum cofactor sulfurase from Bos taurus (Bovine).